The chain runs to 722 residues: Polyribonucleotide nucleotidyltransferase (722 aa).

The Mg(2+) site is built by Asp-495 and Asp-501. Residues Pro-562–Ile-621 enclose the KH domain. Residues Gly-631–Arg-699 enclose the S1 motif domain. Positions Gly-700–Thr-722 are disordered. Positions Glu-712 to Thr-722 are enriched in pro residues.

Belongs to the polyribonucleotide nucleotidyltransferase family. Requires Mg(2+) as cofactor.

It is found in the cytoplasm. The enzyme catalyses RNA(n+1) + phosphate = RNA(n) + a ribonucleoside 5'-diphosphate. Involved in mRNA degradation. Catalyzes the phosphorolysis of single-stranded polyribonucleotides processively in the 3'- to 5'-direction. The protein is Polyribonucleotide nucleotidyltransferase of Prochlorococcus marinus (strain NATL2A).